The sequence spans 171 residues: Shikimate kinase (171 aa).

14 to 19 (GAGKST) provides a ligand contact to ATP. Mg(2+) is bound at residue Ser-18. Asp-36, Arg-60, and Gly-82 together coordinate substrate. Arg-120 is an ATP binding site. Residue Arg-139 coordinates substrate. Gln-156 lines the ATP pocket.

It belongs to the shikimate kinase family. As to quaternary structure, monomer. It depends on Mg(2+) as a cofactor.

Its subcellular location is the cytoplasm. The enzyme catalyses shikimate + ATP = 3-phosphoshikimate + ADP + H(+). The protein operates within metabolic intermediate biosynthesis; chorismate biosynthesis; chorismate from D-erythrose 4-phosphate and phosphoenolpyruvate: step 5/7. Functionally, catalyzes the specific phosphorylation of the 3-hydroxyl group of shikimic acid using ATP as a cosubstrate. The chain is Shikimate kinase from Pseudoalteromonas atlantica (strain T6c / ATCC BAA-1087).